Reading from the N-terminus, the 342-residue chain is Isopentenyl-diphosphate delta-isomerase (342 aa).

11–12 (RK) is a substrate binding site. Residues Ser68, 69–71 (SMT), Ser99, and Asn127 each bind FMN. 99-101 (SMR) is a substrate binding site. Gln162 is a substrate binding site. Glu163 contributes to the Mg(2+) binding site. FMN is bound by residues Lys194, Thr224, 274-276 (GLK), and 295-296 (AG).

It belongs to the IPP isomerase type 2 family. In terms of assembly, homooctamer. Dimer of tetramers. The cofactor is FMN. NADPH is required as a cofactor. Requires Mg(2+) as cofactor.

It localises to the cytoplasm. The enzyme catalyses isopentenyl diphosphate = dimethylallyl diphosphate. Its function is as follows. Involved in the biosynthesis of isoprenoids. Catalyzes the 1,3-allylic rearrangement of the homoallylic substrate isopentenyl (IPP) to its allylic isomer, dimethylallyl diphosphate (DMAPP). In Rickettsia africae (strain ESF-5), this protein is Isopentenyl-diphosphate delta-isomerase.